Reading from the N-terminus, the 1442-residue chain is ABC transporter G family member 11 (1442 aa).

One can recognise an ABC transporter 1 domain in the interval 125-373 (LFTPSFWTKK…FMSLGFDCEP (249 aa)). Residues 478–718 (LNDKFGMYSK…EQGSLYFKGD (241 aa)) form the ABC transmembrane type-2 1 domain. Transmembrane regions (helical) follow at residues 482-502 (FGMY…ASLF), 518-538 (AILS…AMTF), 567-587 (IPFT…MFGL), 592-612 (GKFF…TALF), 627-647 (NISN…IPIP), and 737-757 (IIVY…MEYI). The region spanning 808–1052 (FTWQNIRYTV…LTSYFERHGV (245 aa)) is the ABC transporter 2 domain. 844 to 851 (GSSGAGKT) contacts ATP. Residues 1144 to 1369 (YYTYGSFVQA…YNTCQNYTSA (226 aa)) enclose the ABC transmembrane type-2 2 domain. 6 helical membrane passes run 1147 to 1167 (YGSF…FWNL), 1181 to 1201 (IFEA…QLII), 1220 to 1240 (FAIS…TIFF), 1259 to 1279 (FYFW…GQAV), 1286 to 1306 (MFFA…FCGV), and 1416 to 1436 (VGII…FVYL).

It belongs to the ABC transporter superfamily. ABCG family. PDR (TC 3.A.1.205) subfamily.

It localises to the membrane. In Dictyostelium discoideum (Social amoeba), this protein is ABC transporter G family member 11 (abcG11).